Here is a 265-residue protein sequence, read N- to C-terminus: Osteoclast-associated immunoglobulin-like receptor (265 aa).

The N-terminal stretch at 1-18 is a signal peptide; that stretch reads MVLSLILQLSTLWPACRA. Over 19-231 the chain is Extracellular; the sequence is DFTPTAPLAS…LDYTQGNLIR (213 aa). 2 Ig-like domains span residues 22–115 and 125–218; these read PTAP…SQPS and QLPR…SFEG. Asn-47 carries N-linked (GlcNAc...) asparagine glycosylation. Residues Cys-52 and Cys-99 are joined by a disulfide bond. The N-linked (GlcNAc...) asparagine glycan is linked to Asn-144. Residues 232 to 248 form a helical membrane-spanning segment; the sequence is LGLAGMVLICLGIIVTC. Residues 249–265 are Cytoplasmic-facing; that stretch reads DWHSRSSAFDGLLPQQN.

Belongs to the leukocyte receptor complex/polymeric immunoglobulin receptor (PIR/LRC) family. Specifically expressed in preosteoclasts or mature osteoclasts.

Its subcellular location is the cell membrane. Functionally, regulator of osteoclastogenesis which plays an important bone-specific function in osteoclast differentiation. This is Osteoclast-associated immunoglobulin-like receptor (Oscar) from Mus musculus (Mouse).